The chain runs to 387 residues: EARP-interacting protein homolog (387 aa).

WD repeat units lie at residues 132–172, 182–222, 226–266, and 270–310; these read SAHG…AKAT, KGQL…QIYC, AHGQ…EPVK, and EHSH…SEPF. Residues 309–337 are disordered; it reads PFGHLVDDDDLSDPEENQQEDKGKEPLQD. A compositionally biased stretch (acidic residues) spans 315–326; it reads DDDDLSDPEENQ. The stretch at 345 to 385 is one WD 5 repeat; sequence EHEDSVYAVEWSAADPWLFASLSYDGRLVINRVPRALKYRI.

Belongs to the WD repeat EIPR1 family.

Its subcellular location is the golgi apparatus. The protein localises to the trans-Golgi network. May act as a component of endosomal retrieval machinery that is involved in protein transport from early endosomes to either recycling endosomes or the trans-Golgi network. In Danio rerio (Zebrafish), this protein is EARP-interacting protein homolog.